We begin with the raw amino-acid sequence, 297 residues long: Protoheme IX farnesyltransferase 1 (297 aa).

9 consecutive transmembrane segments (helical) span residues 23 to 43, 45 to 65, 93 to 113, 117 to 137, 145 to 165, 171 to 191, 216 to 236, 241 to 261, and 277 to 297; these read VVVL…RAGV, WSVL…AAVV, LPAL…LLAF, LTAW…TGFL, IVIG…AVSG, PLLL…ALAI, LHIL…YAIH, LYLA…WVLY, and IAYL…LLNL.

It belongs to the UbiA prenyltransferase family. Protoheme IX farnesyltransferase subfamily.

Its subcellular location is the cell inner membrane. It carries out the reaction heme b + (2E,6E)-farnesyl diphosphate + H2O = Fe(II)-heme o + diphosphate. It functions in the pathway porphyrin-containing compound metabolism; heme O biosynthesis; heme O from protoheme: step 1/1. Converts heme B (protoheme IX) to heme O by substitution of the vinyl group on carbon 2 of heme B porphyrin ring with a hydroxyethyl farnesyl side group. The sequence is that of Protoheme IX farnesyltransferase 1 from Pseudomonas putida (strain GB-1).